The following is a 527-amino-acid chain: MASSMGRFLLFFIALRGFLLEASGDFGSGASRDDDVLLPYSRARARLARDCTRVHAGRLEHHESWPPAAQTAGAHRPSVRTFVSYFADRAVPGHLTRAPEPLRTFSVLEPGGPGGCASKRRATVEETARPSGCTVAQNGGFFRMETGECLGNVVSGGRRVSSAGGLQNAQFGIRRDGTLVTGYLSEEEVLDTENPFVQLLSGVVWLIRNGSIYINESQAAECEETQETGSFNRFVNVISARTAVGHDRKGQLVLLHVDGQTEQRGINLWEMAEFLLKQDVVNAINLDGGGSATFVLNGTLASYPSDHCQDNMWRCPRRVSTVVCVHEPRCQPPDCSGHGTCMEGRCQCTGHFWRGAACDKLDCGPANCSQHGLCTETGCRCEAGWTGSNCSEECPLGWYGPGCQSPCKCEHQCPCDPQTGNCSVNWSPTLSSLFSRVKECFPPPEVTVQAEELSLLTRTTWLAITLALAFLLLISTAANVSLFLGSRAARRRHLDGAYVYHPLQEVNGEHPAAEKEQLGDSSNPFKD.

A signal peptide spans M1–D25. Residues F26–R49 constitute a propeptide, removed in mature form. The Lumenal segment spans residues D50–A463. 5 disulfide bridges follow: C116-C149, C133-C324, C308-C315, C363-C374, and C381-C390. Residues N209, N215, and N297 are each glycosylated (N-linked (GlcNAc...) asparagine). Residues D359–S391 enclose the EGF-like domain. 3 N-linked (GlcNAc...) asparagine glycosylation sites follow: N367, N389, and N421. The chain crosses the membrane as a helical span at residues I464–L484. Over G485–D527 the chain is Cytoplasmic. The tract at residues Y498–E505 is mediates the interaction with AP4M1. The Tyrosine-based internalization motif signature appears at Y500–L503. The NPF internalization motif motif lies at N523 to D527.

In terms of assembly, homotetramer arranged as two disulfide-linked homodimers. Interacts with AP4M1. Glycosylated. Contains complex N-linked oligosaccharides with appreciable amounts of sialic acid. In terms of processing, the precursor is cleaved and activated in the trans-Golgi network by a furin endopeptidase.

It is found in the golgi apparatus. It localises to the golgi stack membrane. Its subcellular location is the trans-Golgi network. It carries out the reaction N(4)-[6-(N-acetyl-alpha-D-glucosaminyl-1-phospho)-alpha-D-mannosyl-(1-&gt;2)-alpha-D-mannosyl-(glycan)]-L-asparaginyl-[protein] + H2O = N(4)-[6-phospho-alpha-D-mannosyl-(1-&gt;2)-alpha-D-mannosyl-(glycan)]-L-asparaginyl-[protein] + N-acetyl-D-glucosamine + H(+). The protein operates within protein modification; protein glycosylation. Functionally, catalyzes the second step in the formation of the mannose 6-phosphate targeting signal on lysosomal enzyme oligosaccharides by removing GlcNAc residues from GlcNAc-alpha-P-mannose moieties, which are formed in the first step. Also hydrolyzes UDP-GlcNAc, a sugar donor for Golgi N-acetylglucosaminyltransferases. In Bos taurus (Bovine), this protein is N-acetylglucosamine-1-phosphodiester alpha-N-acetylglucosaminidase (NAGPA).